A 392-amino-acid polypeptide reads, in one-letter code: Formate-dependent phosphoribosylglycinamide formyltransferase (392 aa).

N(1)-(5-phospho-beta-D-ribosyl)glycinamide-binding positions include 22-23 and Glu-82; that span reads EL. ATP-binding positions include Arg-114, Lys-155, 160-165, 195-198, and Glu-203; these read SSGKGQ and EGVV. The ATP-grasp domain maps to 119–308; that stretch reads RLAAEELGLP…EFALHVRAFL (190 aa). Residues Glu-267 and Glu-279 each coordinate Mg(2+). N(1)-(5-phospho-beta-D-ribosyl)glycinamide is bound by residues Asp-286, Lys-355, and 362 to 363; that span reads RR.

It belongs to the PurK/PurT family. As to quaternary structure, homodimer.

It catalyses the reaction N(1)-(5-phospho-beta-D-ribosyl)glycinamide + formate + ATP = N(2)-formyl-N(1)-(5-phospho-beta-D-ribosyl)glycinamide + ADP + phosphate + H(+). It participates in purine metabolism; IMP biosynthesis via de novo pathway; N(2)-formyl-N(1)-(5-phospho-D-ribosyl)glycinamide from N(1)-(5-phospho-D-ribosyl)glycinamide (formate route): step 1/1. Functionally, involved in the de novo purine biosynthesis. Catalyzes the transfer of formate to 5-phospho-ribosyl-glycinamide (GAR), producing 5-phospho-ribosyl-N-formylglycinamide (FGAR). Formate is provided by PurU via hydrolysis of 10-formyl-tetrahydrofolate. The protein is Formate-dependent phosphoribosylglycinamide formyltransferase of Salmonella choleraesuis (strain SC-B67).